Here is a 319-residue protein sequence, read N- to C-terminus: Acetyl esterase (319 aa).

The short motif at 91–93 (HGG) is the Involved in the stabilization of the negatively charged intermediate by the formation of the oxyanion hole element. Active-site residues include S165, D262, and H292.

It belongs to the 'GDXG' lipolytic enzyme family. As to quaternary structure, homodimer. Interacts with MalT and MelA.

Its subcellular location is the cytoplasm. Functionally, displays esterase activity towards short chain fatty esters (acyl chain length of up to 8 carbons). Able to hydrolyze triacetylglycerol (triacetin) and tributyrylglycerol (tributyrin), but not trioleylglycerol (triolein) or cholesterol oleate. Negatively regulates MalT activity by antagonizing maltotriose binding. Inhibits MelA galactosidase activity. The protein is Acetyl esterase of Shigella flexneri.